The following is a 517-amino-acid chain: Cytochrome P450 monooxygenase polD (517 aa).

The chain crosses the membrane as a helical span at residues 5 to 27; that stretch reads VVLVGIVVLVLAYLSSTGKVYPH. Cys435 is a heme binding site.

The protein belongs to the cytochrome P450 family. Heme is required as a cofactor.

The protein localises to the membrane. In terms of biological role, cytochrome P450 monooxygenase; part of the gene cluster that mediates the biosynthesis of antifungal fernane-type triterpenoid polytolypin. PolD doe not seem to be involved in the biosynthesis of polytolypin. Within the pathway, the triterpene cyclase polA first catalyzes the cyclization of 2,3-oxidosqualene to motiol, polc converts the 4-alpha-methyl group of motiol to a carboxyl group, polB is responsible for appending a hydroxyl group at the 2-alpha position and polE is a dual functional P450, which can catalyze the formation of both the 1-beta-hydroxyl group and 10-beta-carboxyl group. The sequence is that of Cytochrome P450 monooxygenase polD from Polytolypa hystricis (strain UAMH7299).